The following is a 125-amino-acid chain: Small ribosomal subunit protein uS12c (125 aa).

It belongs to the universal ribosomal protein uS12 family. As to quaternary structure, part of the 30S ribosomal subunit.

It is found in the plastid. The protein localises to the chloroplast. Functionally, with S4 and S5 plays an important role in translational accuracy. Located at the interface of the 30S and 50S subunits. The protein is Small ribosomal subunit protein uS12c (rps12) of Oltmannsiellopsis viridis (Marine flagellate).